We begin with the raw amino-acid sequence, 40 residues long: Alpha-conotoxin-like Qc1.1c (40 aa).

Residues 1 to 19 (SDGRNTAANDKASNLMALR) constitute a propeptide that is removed on maturation. Intrachain disulfides connect Cys22/Cys28 and Cys23/Cys36. The tract at residues 24 to 26 (PNP) is lacks the Ser-Xaa-Pro motif that is crucial for potent interaction with nAChR.

It belongs to the conotoxin A superfamily. Expressed by the venom duct.

The protein resides in the secreted. Alpha-conotoxins act on postsynaptic membranes, they bind to the nicotinic acetylcholine receptors (nAChR) and thus inhibit them. Has possibly a distinct nAChR binding mode from other alpha-conotoxins, due to a different three residue motif (lacks the Ser-Xaa-Pro motif). The chain is Alpha-conotoxin-like Qc1.1c from Conus quercinus (Oak cone).